A 546-amino-acid polypeptide reads, in one-letter code: Hydroxylamine reductase (546 aa).

[4Fe-4S] cluster-binding residues include Cys3, Cys6, Cys18, and Cys25. The hybrid [4Fe-2O-2S] cluster site is built by His245, Glu269, Cys313, Cys401, Cys429, Cys454, Glu488, and Lys490. The residue at position 401 (Cys401) is a Cysteine persulfide.

The protein belongs to the HCP family. It depends on [4Fe-4S] cluster as a cofactor. Hybrid [4Fe-2O-2S] cluster serves as cofactor.

It localises to the cytoplasm. It carries out the reaction A + NH4(+) + H2O = hydroxylamine + AH2 + H(+). Inhibited by cyanide and by sulfide and iron reagents such as dithioerythritol, 2,2'-dipyridyl and o-phenanthroline. Functionally, could be involved in assimilation and/or detoxification of hydroxylamine, which is a toxic compound that may be formed during nitrate/nitrite assimilation. Catalyzes the reduction of hydroxylamine to form NH(3) and H(2)O. It has a low reductase activity with FAD, FMN, benzyl viologen and bromphenol blue as electrons donors, but it is not able to use NAD or NADP. The chain is Hydroxylamine reductase from Rhodobacter capsulatus (Rhodopseudomonas capsulata).